The following is a 433-amino-acid chain: 3-phosphoshikimate 1-carboxyvinyltransferase (433 aa).

3-phosphoshikimate is bound by residues lysine 23, serine 24, and arginine 28. Lysine 23 lines the phosphoenolpyruvate pocket. Phosphoenolpyruvate is bound by residues glycine 95 and arginine 123. 6 residues coordinate 3-phosphoshikimate: serine 170, serine 171, glutamine 172, serine 198, aspartate 317, and lysine 344. Residue glutamine 172 participates in phosphoenolpyruvate binding. Aspartate 317 (proton acceptor) is an active-site residue. Phosphoenolpyruvate is bound by residues arginine 348, arginine 391, and lysine 416.

The protein belongs to the EPSP synthase family. In terms of assembly, monomer.

It is found in the cytoplasm. The enzyme catalyses 3-phosphoshikimate + phosphoenolpyruvate = 5-O-(1-carboxyvinyl)-3-phosphoshikimate + phosphate. Its pathway is metabolic intermediate biosynthesis; chorismate biosynthesis; chorismate from D-erythrose 4-phosphate and phosphoenolpyruvate: step 6/7. Functionally, catalyzes the transfer of the enolpyruvyl moiety of phosphoenolpyruvate (PEP) to the 5-hydroxyl of shikimate-3-phosphate (S3P) to produce enolpyruvyl shikimate-3-phosphate and inorganic phosphate. This chain is 3-phosphoshikimate 1-carboxyvinyltransferase, found in Neisseria meningitidis serogroup C / serotype 2a (strain ATCC 700532 / DSM 15464 / FAM18).